Here is a 352-residue protein sequence, read N- to C-terminus: MSQKILFIDRDGTLIEEPKSDFQIDTLEKLRFEKDAIPTLLKLKNFGFKFIMVSNQDGLGTPSFPKENFEIAHEKMLDILKSCGIEFQDIFICPHFENENCACRKPKTAMLEEYIKHELYDKEQSFVIGDRESDMILASNLGVRGLRYGELSWKEIENEILSSFRSASYQRTTKETDIKVKVCLNGGKVSIKTGIDFFDHMLEQIAVHGGIGLEISCKGDLEIDEHHSVEDVALALGACIKKALGDKIGIARYGFALPMDECLASCAMDFCNRPHLVYKAKFKKSHLGALSTEMIEHFFYSLSYAMGVSLHLKVKGKNDHHKAEGLFKAFAKALKMAVKIESENLASSKGVI.

Residues 1-164 (MSQKILFIDR…EIENEILSSF (164 aa)) are histidinol-phosphatase. Catalysis depends on Asp9, which acts as the Nucleophile. 2 residues coordinate Mg(2+): Asp9 and Asp11. The active-site Proton donor is Asp11. Residues Cys93, His95, Cys101, and Cys103 each coordinate Zn(2+). Asp130 serves as a coordination point for Mg(2+). Residues 165 to 352 (RSASYQRTTK…ENLASSKGVI (188 aa)) form an imidazoleglycerol-phosphate dehydratase region.

It in the N-terminal section; belongs to the histidinol-phosphatase family. This sequence in the C-terminal section; belongs to the imidazoleglycerol-phosphate dehydratase family. Mg(2+) is required as a cofactor. The cofactor is Zn(2+).

It is found in the cytoplasm. It carries out the reaction D-erythro-1-(imidazol-4-yl)glycerol 3-phosphate = 3-(imidazol-4-yl)-2-oxopropyl phosphate + H2O. The catalysed reaction is L-histidinol phosphate + H2O = L-histidinol + phosphate. It participates in amino-acid biosynthesis; L-histidine biosynthesis; L-histidine from 5-phospho-alpha-D-ribose 1-diphosphate: step 6/9. The protein operates within amino-acid biosynthesis; L-histidine biosynthesis; L-histidine from 5-phospho-alpha-D-ribose 1-diphosphate: step 8/9. The protein is Histidine biosynthesis bifunctional protein HisB of Campylobacter jejuni subsp. jejuni serotype O:6 (strain 81116 / NCTC 11828).